Consider the following 288-residue polypeptide: Scolexin B (288 aa).

The first 20 residues, 1-20, serve as a signal peptide directing secretion; sequence MFASKLAVCSALALLAVAHA. Residues 21–287 form the Peptidase S1 domain; that stretch reads APGGNDIQKI…VRDWIKKVTN (267 aa). The interval 27 to 56 is disordered; that stretch reads IQKITKAPNVPTKAEGDAASKASAPAIPPK. A disulfide bond links C72 and C88. Catalysis depends on charge relay system residues H87 and D145. 2 disulfide bridges follow: C210/C223 and C235/C264. S239 acts as the Charge relay system in catalysis.

The protein belongs to the peptidase S1 family.

The sequence is that of Scolexin B from Heliothis virescens (Tobacco budworm moth).